We begin with the raw amino-acid sequence, 216 residues long: Corrinoid protein DSY3155 (216 aa).

Positions 1–90 constitute a B12-binding N-terminal domain; the sequence is MIMSLLDELK…EIAKKGMSEG (90 aa). The B12-binding domain occupies 93-216; the sequence is KGKIVLGTVE…VELANKILGK (124 aa). Histidine 106 lines the methylcob(III)alamin pocket.

The protein belongs to the methylamine corrinoid protein family.

Functionally, probably harbors a corrinoid prosthetic group and acts as a methyl group carrier between MtgB and MtgA. A methyl group from glycine betaine is likely first transferred to the corrinoid prosthetic group of the enzyme by MtgB, and then transferred to tetrahydrofolate (THF) by MtgA. The methyl group may then be ultimately converted to carbon dioxide, and its oxidation would also provide reducing equivalents for anaerobic respiration. Thus, may function in the pathway that allows anaerobic methylotrophic growth of D.hafniense using glycine betaine. The protein is Corrinoid protein DSY3155 of Desulfitobacterium hafniense (strain Y51).